The following is a 190-amino-acid chain: Xanthine phosphoribosyltransferase (190 aa).

Leu-20 and Asn-27 together coordinate xanthine. Residue 128-132 (ANGHA) participates in 5-phospho-alpha-D-ribose 1-diphosphate binding. Lys-156 contacts xanthine.

This sequence belongs to the purine/pyrimidine phosphoribosyltransferase family. Xpt subfamily. In terms of assembly, homodimer.

The protein localises to the cytoplasm. The catalysed reaction is XMP + diphosphate = xanthine + 5-phospho-alpha-D-ribose 1-diphosphate. The protein operates within purine metabolism; XMP biosynthesis via salvage pathway; XMP from xanthine: step 1/1. Functionally, converts the preformed base xanthine, a product of nucleic acid breakdown, to xanthosine 5'-monophosphate (XMP), so it can be reused for RNA or DNA synthesis. This chain is Xanthine phosphoribosyltransferase, found in Pseudomonas aeruginosa (strain ATCC 15692 / DSM 22644 / CIP 104116 / JCM 14847 / LMG 12228 / 1C / PRS 101 / PAO1).